The primary structure comprises 328 residues: Probable nicotianamine synthase 6 (328 aa).

It belongs to the nicotianamine synthase (NAS)-like family.

It carries out the reaction 3 S-adenosyl-L-methionine = nicotianamine + 3 S-methyl-5'-thioadenosine + 3 H(+). Synthesizes nicotianamine, a polyamine that is the first intermediate in the synthesis of the phytosiderophores of the mugineic acid type found in gramineae which serves as a sensor for the physiological iron status within the plant, and/or might be involved in the transport of iron. The polypeptide is Probable nicotianamine synthase 6 (NAS6) (Hordeum vulgare (Barley)).